Here is a 620-residue protein sequence, read N- to C-terminus: MDSHTLIQALIYLGSAALIVPVAVRLGLGSVLGYLIAGGLIGPWGLRLVTDAQAILHFAEIGVVLMLFVIGLELDPQRLWKLRASVFGGGALQMGACGLLLGGFCVALGLRWQVALLIGLTLALSSTAIAMQAMNERNLTASQMGRSAFAVLLFQDIAAIPLVAMIPLLAASGEATTASAFFLSALKVVGALALVVLLGRFVARPALRFVARSGLREVFSAVALFLVFGFGLLLEEAGLSMAMGAFLAGVLLASSEYRHALESDIEPFKGLLLGLFFIGVGMSIDFGTLVAHPLRVLTLLFGFLIIKTVTLWLVAKPLKVPGRQRRWFAVLLGQGSEFAFVIFGAARSAEVLDAEWAKALTLAVALSMAATPLLLVLLTRLEKSGQQQAREADEIDEEQPRVIIAGFGRFGQIAGRLLLSSGVKMVVLDHDPDHIETLRKFGMKVFYGDATRVDLLESAGVAKAEVLINAIDDPQANLQLTELVQTHFPQVRIIARARDVDHYIRLRQAGVAQPERETFEGALRVGRMALEELGIGSYEARERADLFRCYNQQMVDEMAEGDNDTSARAATFRRTSAMLTEIISEDRAHLSLIQRHGWQGTREGKHTGNDADEPEVKPQP.

12 helical membrane-spanning segments follow: residues 4 to 24 (HTLI…PVAV), 26 to 46 (LGLG…PWGL), 54 to 74 (AILH…GLEL), 86 to 106 (VFGG…GFCV), 114 to 134 (VALL…MQAM), 149 to 169 (FAVL…IPLL), 178 to 198 (ASAF…VVLL), 218 to 238 (VFSA…EEAG), 271 to 291 (LLLG…TLVA), 296 to 316 (VLTL…LVAK), 326 to 346 (RWFA…FGAA), and 359 to 379 (ALTL…VLLT). Residues 399–518 (QPRVIIAGFG…AGVAQPERET (120 aa)) enclose the RCK N-terminal domain. The interval 596–620 (HGWQGTREGKHTGNDADEPEVKPQP) is disordered.

The protein belongs to the monovalent cation:proton antiporter 2 (CPA2) transporter (TC 2.A.37) family. KefC subfamily. As to quaternary structure, homodimer. Interacts with the regulatory subunit KefF.

It is found in the cell inner membrane. Pore-forming subunit of a potassium efflux system that confers protection against electrophiles. Catalyzes K(+)/H(+) antiport. This Cronobacter sakazakii (strain ATCC BAA-894) (Enterobacter sakazakii) protein is Glutathione-regulated potassium-efflux system protein KefC.